The following is a 95-amino-acid chain: Co-chaperonin GroES (95 aa).

Belongs to the GroES chaperonin family. In terms of assembly, heptamer of 7 subunits arranged in a ring. Interacts with the chaperonin GroEL.

It is found in the cytoplasm. Its function is as follows. Together with the chaperonin GroEL, plays an essential role in assisting protein folding. The GroEL-GroES system forms a nano-cage that allows encapsulation of the non-native substrate proteins and provides a physical environment optimized to promote and accelerate protein folding. GroES binds to the apical surface of the GroEL ring, thereby capping the opening of the GroEL channel. This is Co-chaperonin GroES from Stenotrophomonas maltophilia (strain K279a).